We begin with the raw amino-acid sequence, 742 residues long: F-box only protein 30 (742 aa).

The segment at 49–108 (EHRLLCPFERVPCLNSNFGCPFTLARNKVAEHLEMCPASVVCCTMEWNRWPVSYSDRKSY) adopts a TRAF-type zinc-finger fold. Positions 214–242 (SLQGTTNEMDEESNRESSQDRNAKDQDHL) are disordered. Residues 225–242 (ESNRESSQDRNAKDQDHL) are compositionally biased toward basic and acidic residues. At Ser379 the chain carries Phosphoserine. The F-box domain occupies 607–653 (SDHLSSLPFEVLQHIAGFLDGFSLCQLACVSRLMRDICGSLLQSRGM).

Part of a SCF (SKP1-cullin-F-box) protein ligase complex. Interacts with SKP1, CUL1 and RBX1/ROC1. Post-translationally, auto-ubiquitinated. In terms of processing, may be neddylated. Neddylation may be required for E3 ligase activity.

The protein operates within protein modification; protein ubiquitination. Substrate-recognition component of the SCF (SKP1-CUL1-F-box protein)-type E3 ubiquitin ligase complex. Required for muscle atrophy following denervation. In Rattus norvegicus (Rat), this protein is F-box only protein 30 (Fbxo30).